Reading from the N-terminus, the 165-residue chain is 2-C-methyl-D-erythritol 2,4-cyclodiphosphate synthase (165 aa).

Residues aspartate 9 and histidine 11 each coordinate a divalent metal cation. 4-CDP-2-C-methyl-D-erythritol 2-phosphate-binding positions include 9-11 and 35-36; these read DVH and HS. Residue histidine 43 participates in a divalent metal cation binding. Residues 57–59, 101–107, 133–136, phenylalanine 140, and arginine 143 contribute to the 4-CDP-2-C-methyl-D-erythritol 2-phosphate site; these read DIG, AQAPKML, and TTTE.

It belongs to the IspF family. In terms of assembly, homotrimer. The cofactor is a divalent metal cation.

The catalysed reaction is 4-CDP-2-C-methyl-D-erythritol 2-phosphate = 2-C-methyl-D-erythritol 2,4-cyclic diphosphate + CMP. It participates in isoprenoid biosynthesis; isopentenyl diphosphate biosynthesis via DXP pathway; isopentenyl diphosphate from 1-deoxy-D-xylulose 5-phosphate: step 4/6. Involved in the biosynthesis of isopentenyl diphosphate (IPP) and dimethylallyl diphosphate (DMAPP), two major building blocks of isoprenoid compounds. Catalyzes the conversion of 4-diphosphocytidyl-2-C-methyl-D-erythritol 2-phosphate (CDP-ME2P) to 2-C-methyl-D-erythritol 2,4-cyclodiphosphate (ME-CPP) with a corresponding release of cytidine 5-monophosphate (CMP). The polypeptide is 2-C-methyl-D-erythritol 2,4-cyclodiphosphate synthase (Pseudoalteromonas translucida (strain TAC 125)).